The following is a 294-amino-acid chain: Cytidine deaminase (294 aa).

CMP/dCMP-type deaminase domains lie at 48–168 (DEDA…FGPK) and 186–294 (VSGD…VLLG). 89-91 (NME) serves as a coordination point for substrate. His102 serves as a coordination point for Zn(2+). Glu104 (proton donor) is an active-site residue. Cys129 and Cys132 together coordinate Zn(2+).

The protein belongs to the cytidine and deoxycytidylate deaminase family. In terms of assembly, homodimer. The cofactor is Zn(2+).

It catalyses the reaction cytidine + H2O + H(+) = uridine + NH4(+). The enzyme catalyses 2'-deoxycytidine + H2O + H(+) = 2'-deoxyuridine + NH4(+). This enzyme scavenges exogenous and endogenous cytidine and 2'-deoxycytidine for UMP synthesis. This chain is Cytidine deaminase, found in Klebsiella pneumoniae (strain 342).